A 58-amino-acid polypeptide reads, in one-letter code: Large ribosomal subunit protein uL30 (58 aa).

This sequence belongs to the universal ribosomal protein uL30 family. As to quaternary structure, part of the 50S ribosomal subunit.

This chain is Large ribosomal subunit protein uL30, found in Acinetobacter baylyi (strain ATCC 33305 / BD413 / ADP1).